The following is a 708-amino-acid chain: Kin of IRRE-like protein 2 (708 aa).

Residues 1–20 (MLRMRVPALLVLLFCFRGRA) form the signal peptide. The Extracellular segment spans residues 21–510 (GPSPHFLQQP…GRRDLLPTVR (490 aa)). Ig-like C2-type domains are found at residues 24–118 (PHFL…AQLH), 123–222 (PEAP…ITLS), 227–307 (PEVT…TALD), 312–394 (PILQ…ARLT), and 398–501 (PPVV…ASLG). A disulfide bridge connects residues Cys-45 and Cys-103. The N-linked (GlcNAc...) asparagine glycan is linked to Asn-143. Disulfide bonds link Cys-146–Cys-204 and Cys-248–Cys-291. The Cell attachment site motif lies at 149–151 (RGD). The N-linked (GlcNAc...) asparagine glycan is linked to Asn-301. Intrachain disulfides connect Cys-333-Cys-375 and Cys-419-Cys-485. Asn-484 carries N-linked (GlcNAc...) asparagine glycosylation. Residues 511–531 (IVAGVAAATTTLLMVITGVAL) traverse the membrane as a helical segment. Topologically, residues 532 to 708 (CCWRHSKASA…PSHPRLQTHV (177 aa)) are cytoplasmic. The interval 545 to 601 (EQKNLMRIPGSSDGSSSRGPEEEETGSREDRGPIVHTDHSDLVLEEEGTLETKDPTN) is disordered. Low complexity predominate over residues 553–562 (PGSSDGSSSR). Residues 569–586 (TGSREDRGPIVHTDHSDL) are compositionally biased toward basic and acidic residues. Position 571 is a phosphoserine (Ser-571). 3 positions are modified to phosphotyrosine: Tyr-603, Tyr-604, and Tyr-661. Residues 684–708 (LAPGTPPFPYAAFPTPSHPRLQTHV) are disordered.

It belongs to the immunoglobulin superfamily. As to quaternary structure, homodimer. Interacts with NPHS2/podocin (via the C-terminus). Interacts with NPHS1 (via the Ig-like domains). Interacts with FYN. N-glycosylated. In terms of processing, the extracellular domain is cleaved leading to the generation of a soluble fragment and a membrane-bound C-terminal fragment, which is further cleaved by gamma-secretase. In terms of tissue distribution, highly expressed in beta-cells of the pancreatic islets.

Its subcellular location is the cell membrane. In terms of biological role, may regulate basal insulin secretion. This is Kin of IRRE-like protein 2 (KIRREL2) from Homo sapiens (Human).